A 435-amino-acid polypeptide reads, in one-letter code: Eukaryotic peptide chain release factor subunit 1-3 (435 aa).

A2 carries the post-translational modification N-acetylalanine.

This sequence belongs to the eukaryotic release factor 1 family. As to quaternary structure, heterodimer of two subunits, one of which binds GTP.

The protein localises to the cytoplasm. Directs the termination of nascent peptide synthesis (translation) in response to the termination codons UAA, UAG and UGA. Modulates plant growth and development. The sequence is that of Eukaryotic peptide chain release factor subunit 1-3 from Brassica oleracea var. botrytis (Cauliflower).